We begin with the raw amino-acid sequence, 291 residues long: Glycine--tRNA ligase alpha subunit (291 aa).

It belongs to the class-II aminoacyl-tRNA synthetase family. In terms of assembly, tetramer of two alpha and two beta subunits.

It localises to the cytoplasm. It carries out the reaction tRNA(Gly) + glycine + ATP = glycyl-tRNA(Gly) + AMP + diphosphate. This chain is Glycine--tRNA ligase alpha subunit, found in Microcystis aeruginosa (strain NIES-843 / IAM M-2473).